The following is a 395-amino-acid chain: Elongation factor Tu (395 aa).

Residues 10–204 form the tr-type G domain; the sequence is KPHLNIGTIG…TVDNYIKEPI (195 aa). The tract at residues 19–26 is G1; it reads GHVDHGKT. Position 19-26 (19-26) interacts with GTP; it reads GHVDHGKT. Residue Thr-26 coordinates Mg(2+). The tract at residues 60–64 is G2; that stretch reads GITIN. The G3 stretch occupies residues 81 to 84; it reads DCPG. Residues 81-85 and 136-139 each bind GTP; these read DCPGH and NKVD. The tract at residues 136–139 is G4; that stretch reads NKVD. The G5 stretch occupies residues 174 to 176; the sequence is SAL.

The protein belongs to the TRAFAC class translation factor GTPase superfamily. Classic translation factor GTPase family. EF-Tu/EF-1A subfamily. As to quaternary structure, monomer.

The protein localises to the cytoplasm. It carries out the reaction GTP + H2O = GDP + phosphate + H(+). Its function is as follows. GTP hydrolase that promotes the GTP-dependent binding of aminoacyl-tRNA to the A-site of ribosomes during protein biosynthesis. The polypeptide is Elongation factor Tu (Karelsulcia muelleri (strain GWSS) (Sulcia muelleri)).